Here is a 259-residue protein sequence, read N- to C-terminus: Proteasome subunit alpha (259 aa).

A compositionally biased stretch (low complexity) spans 233 to 243; it reads PAAPAAASESA. Positions 233-259 are disordered; the sequence is PAAPAAASESAPEPKPDTETKPADPQD. Basic and acidic residues predominate over residues 244–259; that stretch reads PEPKPDTETKPADPQD.

The protein belongs to the peptidase T1A family. The 20S proteasome core is composed of 14 alpha and 14 beta subunits that assemble into four stacked heptameric rings, resulting in a barrel-shaped structure. The two inner rings, each composed of seven catalytic beta subunits, are sandwiched by two outer rings, each composed of seven alpha subunits. The catalytic chamber with the active sites is on the inside of the barrel. Has a gated structure, the ends of the cylinder being occluded by the N-termini of the alpha-subunits. Is capped by the proteasome-associated ATPase, ARC.

Its subcellular location is the cytoplasm. The protein operates within protein degradation; proteasomal Pup-dependent pathway. With respect to regulation, the formation of the proteasomal ATPase ARC-20S proteasome complex, likely via the docking of the C-termini of ARC into the intersubunit pockets in the alpha-rings, may trigger opening of the gate for substrate entry. Interconversion between the open-gate and close-gate conformations leads to a dynamic regulation of the 20S proteasome proteolysis activity. Component of the proteasome core, a large protease complex with broad specificity involved in protein degradation. The protein is Proteasome subunit alpha of Rhodococcus opacus (strain B4).